A 220-amino-acid polypeptide reads, in one-letter code: 5'(3')-deoxyribonucleotidase, mitochondrial (220 aa).

The transit peptide at 1–23 (MHRLRGCCARPRGAPLRAERSRA) directs the protein to the mitochondrion. Residue D33 is the Nucleophile of the active site. Positions 33 and 35 each coordinate Mg(2+). Residue D35 is the Proton donor of the active site. 8 residues coordinate substrate: D35, F41, F67, W68, V69, W88, T122, and K157. D168 lines the Mg(2+) pocket.

It belongs to the 5'(3')-deoxyribonucleotidase family. As to quaternary structure, homodimer. Requires Mg(2+) as cofactor.

Its subcellular location is the mitochondrion. In terms of biological role, dephosphorylates specifically the 5' and 2'(3')-phosphates of uracil and thymine deoxyribonucleotides, and so protects mitochondrial DNA replication from excess dTTP. Has only marginal activity towards dIMP and dGMP. The protein is 5'(3')-deoxyribonucleotidase, mitochondrial (Nt5m) of Mus musculus (Mouse).